We begin with the raw amino-acid sequence, 480 residues long: Phenolic acid decarboxylase (480 aa).

3 residues coordinate Mn(2+): N163, H185, and E227. Prenylated FMN-binding positions include 163 to 168 (NVGTYR) and 184 to 185 (MH). E278 serves as the catalytic Proton donor. The interval 443-466 (TTPVPPEPNPRETQLLDPPDGTEE) is disordered.

Belongs to the UbiD family. YclC subfamily. In terms of assembly, homohexamer. The cofactor is prenylated FMN. It depends on Mn(2+) as a cofactor.

It carries out the reaction 4-hydroxybenzoate + H(+) = phenol + CO2. The enzyme catalyses 3,4-dihydroxybenzoate + H(+) = catechol + CO2. Its activity is regulated as follows. Inhibited by Zn(2+), (2,3,4)-trihydroxybenzoate and (3,4,5)-trihydroxybenzoate. Ammonium and rubidium ions decrease the activity of the carboxylation of 3,4-dihydroxybenzoate by about 20%. In terms of biological role, involved in the non-oxidative decarboxylation and detoxification of phenolic derivatives under anaerobic conditions. Oxygen-sensitive phenolic acid decarboxylase that catalyzes the reversible decarboxylation of 4-hydroxybenzoate and 3,4-dihydroxybenzoate. In Sedimentibacter hydroxybenzoicus (Clostridium hydroxybenzoicum), this protein is Phenolic acid decarboxylase.